A 403-amino-acid chain; its full sequence is Arginine biosynthesis bifunctional protein ArgJ (403 aa).

Residues Thr-151, Lys-177, Thr-188, Glu-275, Asn-398, and Ser-403 each coordinate substrate. Residue Thr-188 is the Nucleophile of the active site.

The protein belongs to the ArgJ family. As to quaternary structure, heterotetramer of two alpha and two beta chains.

It localises to the cytoplasm. It carries out the reaction N(2)-acetyl-L-ornithine + L-glutamate = N-acetyl-L-glutamate + L-ornithine. It catalyses the reaction L-glutamate + acetyl-CoA = N-acetyl-L-glutamate + CoA + H(+). Its pathway is amino-acid biosynthesis; L-arginine biosynthesis; L-ornithine and N-acetyl-L-glutamate from L-glutamate and N(2)-acetyl-L-ornithine (cyclic): step 1/1. The protein operates within amino-acid biosynthesis; L-arginine biosynthesis; N(2)-acetyl-L-ornithine from L-glutamate: step 1/4. Its function is as follows. Catalyzes two activities which are involved in the cyclic version of arginine biosynthesis: the synthesis of N-acetylglutamate from glutamate and acetyl-CoA as the acetyl donor, and of ornithine by transacetylation between N(2)-acetylornithine and glutamate. The chain is Arginine biosynthesis bifunctional protein ArgJ from Caulobacter vibrioides (strain ATCC 19089 / CIP 103742 / CB 15) (Caulobacter crescentus).